A 504-amino-acid polypeptide reads, in one-letter code: DnaJ homolog subfamily C member 3 (504 aa).

The first 31 residues, 1–31 (MVAPGSVTSRLGSVFPFLLVLVDLQYEGAEC), serve as a signal peptide directing secretion. TPR repeat units lie at residues 37–70 (VEKH…DPDN), 72–104 (IAYY…KMDF), 105–138 (TAAR…NPSE), 154–187 (MQRL…CVWD), 189–221 (ELRE…KNDN), 222–255 (TEAF…DQDH), 268–301 (LNKL…EPSI), 306–339 (VRSK…EPDN), and 340–373 (VNAL…NEND). Cys-248 and Cys-258 are joined by a disulfide. Position 274 is a phosphoserine; by FAM20C (Ser-274). Residues Cys-313 and Cys-329 are joined by a disulfide bond. A flexible linker region spans residues 375-393 (QIREGLEKAQRLLKQSQKR). In terms of domain architecture, J spans 394-462 (DYYKILGVKR…EMRKKFDDGE (69 aa)). The tract at residues 451-481 (DPEMRKKFDDGEDPLDAESQQGGGGNPFHRS) is disordered.

Interacts with EIF2AK4/GCN2; this interaction occurs under endoplasmic reticulum (ER) stress, hypothermic and amino acid starving stress conditions and inhibits EIF2AK4/GCN2 kinase activity. Interacts with EIF2AK3. Interacts with EIF2AK2. Forms a trimeric complex with DNAJB1 and HSPA8. Interacts with THAP12. In terms of tissue distribution, widely expressed with high level in the pancreas and testis. Also expressed in cell lines with different levels.

The protein resides in the endoplasmic reticulum. Its function is as follows. Involved in the unfolded protein response (UPR) during endoplasmic reticulum (ER) stress. Acts as a negative regulator of the EIF2AK4/GCN2 kinase activity by preventing the phosphorylation of eIF-2-alpha at 'Ser-52' and hence attenuating general protein synthesis under ER stress, hypothermic and amino acid starving stress conditions. Co-chaperone of HSPA8/HSC70, it stimulates its ATPase activity. May inhibit both the autophosphorylation of EIF2AK2/PKR and the ability of EIF2AK2 to catalyze phosphorylation of the EIF2A. May inhibit EIF2AK3/PERK activity. In Homo sapiens (Human), this protein is DnaJ homolog subfamily C member 3 (DNAJC3).